The following is a 462-amino-acid chain: Phosphoglucosamine mutase (462 aa).

Residue serine 111 is the Phosphoserine intermediate of the active site. Residues serine 111, aspartate 250, aspartate 252, and aspartate 254 each contribute to the Mg(2+) site. The residue at position 111 (serine 111) is a Phosphoserine.

It belongs to the phosphohexose mutase family. Requires Mg(2+) as cofactor. Post-translationally, activated by phosphorylation.

The enzyme catalyses alpha-D-glucosamine 1-phosphate = D-glucosamine 6-phosphate. Catalyzes the conversion of glucosamine-6-phosphate to glucosamine-1-phosphate. The polypeptide is Phosphoglucosamine mutase (Synechococcus sp. (strain WH7803)).